Consider the following 394-residue polypeptide: Phosphopentomutase (394 aa).

Mn(2+) contacts are provided by Asp10, Asp282, His287, Asp323, His324, and His335.

This sequence belongs to the phosphopentomutase family. The cofactor is Mn(2+).

It localises to the cytoplasm. The catalysed reaction is 2-deoxy-alpha-D-ribose 1-phosphate = 2-deoxy-D-ribose 5-phosphate. It catalyses the reaction alpha-D-ribose 1-phosphate = D-ribose 5-phosphate. It functions in the pathway carbohydrate degradation; 2-deoxy-D-ribose 1-phosphate degradation; D-glyceraldehyde 3-phosphate and acetaldehyde from 2-deoxy-alpha-D-ribose 1-phosphate: step 1/2. Functionally, isomerase that catalyzes the conversion of deoxy-ribose 1-phosphate (dRib-1-P) and ribose 1-phosphate (Rib-1-P) to deoxy-ribose 5-phosphate (dRib-5-P) and ribose 5-phosphate (Rib-5-P), respectively. This Dictyoglomus turgidum (strain DSM 6724 / Z-1310) protein is Phosphopentomutase.